The sequence spans 554 residues: (E)-beta-caryophyllene synthase (554 aa).

Mn(2+) is bound by residues D313 and D317. The DDXXD motif motif lies at 313-317; the sequence is DDTYD. Homodimerization stretches follow at residues 319–325 and 391–427; these read YGTLDEL and EAQW…LAVI. Mn(2+) contacts are provided by D457 and E465.

Belongs to the terpene synthase family. Homodimer. Requires Mn(2+) as cofactor. Mg(2+) serves as cofactor. As to expression, expressed in peltate glandular trichomes. Present at low levels in flowers, leaves and stems.

It carries out the reaction (2E,6E)-farnesyl diphosphate = (-)-(E)-beta-caryophyllene + diphosphate. The enzyme catalyses (2E,6E)-farnesyl diphosphate = alpha-humulene + diphosphate. The protein operates within secondary metabolite biosynthesis; terpenoid biosynthesis. Functionally, involved in the biosynthesis of phenolic sesquiterpenes natural products. Sesquiterpene synthase converting (2E,6E)-farnesyl diphosphate (FPP) to (E)-beta-caryophyllene and alpha-humulene. In Origanum vulgare (Wild marjoram), this protein is (E)-beta-caryophyllene synthase.